A 954-amino-acid polypeptide reads, in one-letter code: Glycine dehydrogenase (decarboxylating) (954 aa).

K699 is subject to N6-(pyridoxal phosphate)lysine.

Belongs to the GcvP family. In terms of assembly, the glycine cleavage system is composed of four proteins: P, T, L and H. The cofactor is pyridoxal 5'-phosphate.

It catalyses the reaction N(6)-[(R)-lipoyl]-L-lysyl-[glycine-cleavage complex H protein] + glycine + H(+) = N(6)-[(R)-S(8)-aminomethyldihydrolipoyl]-L-lysyl-[glycine-cleavage complex H protein] + CO2. Its function is as follows. The glycine cleavage system catalyzes the degradation of glycine. The P protein binds the alpha-amino group of glycine through its pyridoxal phosphate cofactor; CO(2) is released and the remaining methylamine moiety is then transferred to the lipoamide cofactor of the H protein. The chain is Glycine dehydrogenase (decarboxylating) from Nitrobacter winogradskyi (strain ATCC 25391 / DSM 10237 / CIP 104748 / NCIMB 11846 / Nb-255).